Here is a 485-residue protein sequence, read N- to C-terminus: D-alanine--D-alanyl carrier protein ligase (485 aa).

144-145 (TS) lines the ATP pocket. D189 contacts D-alanine. An ATP-binding site is contributed by 284 to 289 (NTYGPT). V293 serves as a coordination point for D-alanine. The ATP site is built by D365 and K473. A D-alanine-binding site is contributed by K473.

This sequence belongs to the ATP-dependent AMP-binding enzyme family. DltA subfamily.

The protein localises to the cytoplasm. The catalysed reaction is holo-[D-alanyl-carrier protein] + D-alanine + ATP = D-alanyl-[D-alanyl-carrier protein] + AMP + diphosphate. Its pathway is cell wall biogenesis; lipoteichoic acid biosynthesis. Catalyzes the first step in the D-alanylation of lipoteichoic acid (LTA), the activation of D-alanine and its transfer onto the D-alanyl carrier protein (Dcp) DltC. In an ATP-dependent two-step reaction, forms a high energy D-alanyl-AMP intermediate, followed by transfer of the D-alanyl residue as a thiol ester to the phosphopantheinyl prosthetic group of the Dcp. D-alanylation of LTA plays an important role in modulating the properties of the cell wall in Gram-positive bacteria, influencing the net charge of the cell wall. The sequence is that of D-alanine--D-alanyl carrier protein ligase from Staphylococcus aureus (strain MRSA252).